We begin with the raw amino-acid sequence, 218 residues long: Transaldolase (218 aa).

Lysine 83 serves as the catalytic Schiff-base intermediate with substrate.

This sequence belongs to the transaldolase family. Type 3B subfamily.

The protein resides in the cytoplasm. It catalyses the reaction D-sedoheptulose 7-phosphate + D-glyceraldehyde 3-phosphate = D-erythrose 4-phosphate + beta-D-fructose 6-phosphate. The protein operates within carbohydrate degradation; pentose phosphate pathway; D-glyceraldehyde 3-phosphate and beta-D-fructose 6-phosphate from D-ribose 5-phosphate and D-xylulose 5-phosphate (non-oxidative stage): step 2/3. Transaldolase is important for the balance of metabolites in the pentose-phosphate pathway. Does not show fructose-6-P aldolase activity. The polypeptide is Transaldolase (tal) (Thermotoga maritima (strain ATCC 43589 / DSM 3109 / JCM 10099 / NBRC 100826 / MSB8)).